Reading from the N-terminus, the 137-residue chain is Leaf-specific thionin (137 aa).

The N-terminal stretch at 1-28 (MATNKSIKSVVICVLILGLVLEQVQVEA) is a signal peptide. 4 disulfides stabilise this stretch: C31–C68, C32–C60, C40–C58, and C44–C54. Positions 75–137 (LNLLPESGEP…DGEVIQSVEA (63 aa)) are cleaved as a propeptide — acidic domain.

It belongs to the plant thionin (TC 1.C.44) family. 4 C-C subfamily.

Its subcellular location is the secreted. Its function is as follows. Thionins are small plant proteins which are toxic to animal cells. They seem to exert their toxic effect at the level of the cell membrane. Their precise function is not known. The polypeptide is Leaf-specific thionin (THI1.5) (Hordeum vulgare (Barley)).